Reading from the N-terminus, the 847-residue chain is Putative disease resistance RPP13-like protein 2 (847 aa).

Positions 26–42 form a coiled coil; that stretch reads GVKDDLEELKTELTCIQ. The NB-ARC domain occupies 142-446; it reads STSRVREVRR…AEGFIQEDEE (305 aa). 191–198 provides a ligand contact to ATP; the sequence is GMEGLGKT. LRR repeat units lie at residues 587 to 610, 612 to 634, 703 to 726, 749 to 774, and 807 to 830; these read LVHL…ISNL, FLQT…NLTS, LKNL…TVRF, FPSL…KLQR, and IKRL…NLDN.

The protein belongs to the disease resistance NB-LRR family. RPP13 subfamily.

Functionally, potential disease resistance protein. In Arabidopsis thaliana (Mouse-ear cress), this protein is Putative disease resistance RPP13-like protein 2 (RPP13L2).